The primary structure comprises 1173 residues: Clustered mitochondria protein homolog (1173 aa).

Positions 1–21 are enriched in low complexity; the sequence is MSTIDLPTSSLPGSSGDPSGT. Positions 1–25 are disordered; it reads MSTIDLPTSSLPGSSGDPSGTEMSH. A Clu domain is found at 316 to 565; sequence VPHRADLSRT…SLFPLDAQFL (250 aa). The segment at 888-910 is disordered; it reads KFTGKKGNKKKRNLGKSQNTTNR. The span at 890–901 shows a compositional bias: basic residues; that stretch reads TGKKGNKKKRNL. The stretch at 984 to 1017 is one TPR repeat; sequence ARAYCQLAMIYHQLEKKEEAVELARKAVIVCERF.

It belongs to the CLU family. May associate with the eukaryotic translation initiation factor 3 (eIF-3) complex.

It is found in the cytoplasm. In terms of biological role, mRNA-binding protein involved in proper cytoplasmic distribution of mitochondria. The sequence is that of Clustered mitochondria protein homolog from Schizosaccharomyces pombe (strain 972 / ATCC 24843) (Fission yeast).